Consider the following 254-residue polypeptide: Esterase YbfF (254 aa).

Residues serine 89 and histidine 234 contribute to the active site.

Belongs to the DmpD/TodF/XylF esterase family.

Its function is as follows. Displays esterase activity toward palmitoyl-CoA, malonyl-CoA and pNP-butyrate. This is Esterase YbfF (ybfF) from Escherichia coli (strain K12).